The primary structure comprises 251 residues: Triosephosphate isomerase (251 aa).

9 to 11 (NWK) serves as a coordination point for substrate. Histidine 95 (electrophile) is an active-site residue. Glutamate 167 serves as the catalytic Proton acceptor. Substrate is bound by residues glycine 173, serine 213, and 234 to 235 (GG).

It belongs to the triosephosphate isomerase family. As to quaternary structure, homodimer.

It localises to the cytoplasm. The catalysed reaction is D-glyceraldehyde 3-phosphate = dihydroxyacetone phosphate. It participates in carbohydrate biosynthesis; gluconeogenesis. The protein operates within carbohydrate degradation; glycolysis; D-glyceraldehyde 3-phosphate from glycerone phosphate: step 1/1. Involved in the gluconeogenesis. Catalyzes stereospecifically the conversion of dihydroxyacetone phosphate (DHAP) to D-glyceraldehyde-3-phosphate (G3P). The polypeptide is Triosephosphate isomerase (Trichlorobacter lovleyi (strain ATCC BAA-1151 / DSM 17278 / SZ) (Geobacter lovleyi)).